We begin with the raw amino-acid sequence, 417 residues long: Gamma-glutamyl phosphate reductase (417 aa).

It belongs to the gamma-glutamyl phosphate reductase family.

It localises to the cytoplasm. It catalyses the reaction L-glutamate 5-semialdehyde + phosphate + NADP(+) = L-glutamyl 5-phosphate + NADPH + H(+). Its pathway is amino-acid biosynthesis; L-proline biosynthesis; L-glutamate 5-semialdehyde from L-glutamate: step 2/2. Functionally, catalyzes the NADPH-dependent reduction of L-glutamate 5-phosphate into L-glutamate 5-semialdehyde and phosphate. The product spontaneously undergoes cyclization to form 1-pyrroline-5-carboxylate. The sequence is that of Gamma-glutamyl phosphate reductase from Aeromonas salmonicida (strain A449).